A 1784-amino-acid chain; its full sequence is Protein mel-28 (1784 aa).

The segment at 1-956 (MDNENSSIFK…QNDDEDMPEV (956 aa)) is required for nuclear envelope and kinetochore localization. A required for association with mitotic chromosomes region spans residues 566 to 778 (GKIEEFCQLA…TSPEDSEHSE (213 aa)). An important for nuclear localization region spans residues 846-1071 (APMTVTIGKH…HNSILKTAKG (226 aa)). Disordered regions lie at residues 945-994 (KVQN…AKRI) and 1115-1784 (ETMT…RAKQ). Residues 1126 to 1149 (GKHDEEKDSEKNVVDEMEEVKDQE) are compositionally biased toward basic and acidic residues. Acidic residues-rich tracts occupy residues 1222–1232 (LEEEGEDEDIW) and 1266–1278 (VNEE…EEVQ). Positions 1239-1601 (FEVQMDEDCE…TTVDPSSSAL (363 aa)) are chromatin binding. A compositionally biased stretch (basic and acidic residues) spans 1279–1293 (QDAKEPEKTEKRQEE). Over residues 1297–1306 (EVMQPVIPEE) the composition is skewed to low complexity. Acidic residues predominate over residues 1321–1336 (ELQEEPDIVPTGDEDT). Residues 1337 to 1351 (ADKVQEQAVEEDRPP) show a composition bias toward basic and acidic residues. A compositionally biased stretch (polar residues) spans 1352-1366 (SRNTRSSSVQKSTSQ). A compositionally biased stretch (basic and acidic residues) spans 1367–1382 (VEDRDPKELVEEERPP). The segment covering 1383-1398 (SRNTRSASVQKSSNQE) has biased composition (polar residues). Positions 1428 to 1444 (KVKDQKPEELIEEDRPP) are enriched in basic and acidic residues. Over residues 1445–1459 (SRNTRSASAQKTVAA) the composition is skewed to polar residues. Low complexity predominate over residues 1533 to 1546 (AAASTSSSRAGSVT). The span at 1566–1576 (VQEEEEEEAEE) shows a compositional bias: acidic residues. The span at 1581-1606 (SRSTRSASVKNTTVDPSSSALASTKR) shows a compositional bias: polar residues. Residues 1601–1784 (LASTKRTTSR…LLRSARRAKQ (184 aa)) are important for nuclear localization. Residues 1630-1642 (TPKRGRPAKKDAG) constitute a DNA-binding region (a.T hook 1). Residues 1630-1784 (TPKRGRPAKK…LLRSARRAKQ (155 aa)) are required for chromosome segregation, nuclear growth, nucleoplasmic accumulation and cell cycle timing, but not required for nuclear envelope and kinetochore localization. Positions 1716-1735 (AGTSKQSRSVTRSRASSIDV) are enriched in polar residues. Positions 1746 to 1758 (KRGRGRPPKTVLE) form a DNA-binding region, a.T hook 2.

As to expression, ubiquitously expressed (at protein level).

The protein resides in the nucleus. The protein localises to the nucleoplasm. Its subcellular location is the nucleus envelope. It is found in the nucleus inner membrane. It localises to the nuclear pore complex. The protein resides in the chromosome. The protein localises to the centromere. Its subcellular location is the kinetochore. Its function is as follows. Nuclear envelope protein which has essential roles in assembly of nuclear pore complexes and in chromatin maintenance during the cell cycle. Appears to be a stable structural component of the nuclear envelope during interphase. In dividing cells, localizes to kinetochores during early stages of mitosis and then to chromatin during late mitosis. Important for several mitotic processes including chromosome condensation, kinetochore assembly, chromosome segregation and cell-cycle timing. In postmitotic cells, plays a role in the early steps of nuclear pore complex assembly by recruiting the nucleoporins npp-10 and npp-5 to chromatin. Also involved in meiotic chromosome segregation. May function downstream of the Ran GTPase signaling pathway. This Caenorhabditis elegans protein is Protein mel-28.